Consider the following 324-residue polypeptide: tRNA dimethylallyltransferase (324 aa).

Residue 17–24 (GPTASGKT) coordinates ATP. Substrate is bound at residue 19 to 24 (TASGKT). Interaction with substrate tRNA stretches follow at residues 42–45 (DSAL), 166–170 (QRIQR), and 251–256 (RCVGYR).

It belongs to the IPP transferase family. In terms of assembly, monomer. Mg(2+) is required as a cofactor.

The catalysed reaction is adenosine(37) in tRNA + dimethylallyl diphosphate = N(6)-dimethylallyladenosine(37) in tRNA + diphosphate. In terms of biological role, catalyzes the transfer of a dimethylallyl group onto the adenine at position 37 in tRNAs that read codons beginning with uridine, leading to the formation of N6-(dimethylallyl)adenosine (i(6)A). This chain is tRNA dimethylallyltransferase, found in Burkholderia pseudomallei (strain 1106a).